The primary structure comprises 390 residues: Phosphopentomutase (390 aa).

Positions 11, 283, 288, 324, 325, and 336 each coordinate Mn(2+).

It belongs to the phosphopentomutase family. Mn(2+) serves as cofactor.

It localises to the cytoplasm. The enzyme catalyses 2-deoxy-alpha-D-ribose 1-phosphate = 2-deoxy-D-ribose 5-phosphate. The catalysed reaction is alpha-D-ribose 1-phosphate = D-ribose 5-phosphate. Its pathway is carbohydrate degradation; 2-deoxy-D-ribose 1-phosphate degradation; D-glyceraldehyde 3-phosphate and acetaldehyde from 2-deoxy-alpha-D-ribose 1-phosphate: step 1/2. Functionally, isomerase that catalyzes the conversion of deoxy-ribose 1-phosphate (dRib-1-P) and ribose 1-phosphate (Rib-1-P) to deoxy-ribose 5-phosphate (dRib-5-P) and ribose 5-phosphate (Rib-5-P), respectively. In Alkaliphilus metalliredigens (strain QYMF), this protein is Phosphopentomutase.